The primary structure comprises 259 residues: Type III pantothenate kinase (259 aa).

Asp-6–Val-13 lines the ATP pocket. Residues Tyr-100 and Gly-107 to Arg-110 contribute to the substrate site. Asp-109 (proton acceptor) is an active-site residue. Residue Asp-129 participates in K(+) binding. Thr-132 is a binding site for ATP. Thr-184 lines the substrate pocket.

Belongs to the type III pantothenate kinase family. Homodimer. NH4(+) is required as a cofactor. It depends on K(+) as a cofactor.

It localises to the cytoplasm. It carries out the reaction (R)-pantothenate + ATP = (R)-4'-phosphopantothenate + ADP + H(+). It functions in the pathway cofactor biosynthesis; coenzyme A biosynthesis; CoA from (R)-pantothenate: step 1/5. Its function is as follows. Catalyzes the phosphorylation of pantothenate (Pan), the first step in CoA biosynthesis. The chain is Type III pantothenate kinase from Clostridium novyi (strain NT).